A 421-amino-acid chain; its full sequence is 2',3'-cyclic-nucleotide 3'-phosphodiesterase (421 aa).

Phosphoserine is present on residues Ser6 and Ser9. Residue Tyr110 is modified to Phosphotyrosine. Position 170 is a phosphoserine (Ser170). His251 (proton acceptor) is an active-site residue. Thr253 serves as a coordination point for substrate. The Proton donor role is filled by His330. Thr332 provides a ligand contact to substrate. A Phosphoserine modification is found at Ser359. Position 418 is a cysteine methyl ester (Cys418). Residue Cys418 is the site of S-farnesyl cysteine attachment. The propeptide at 419–421 (TII) is removed in mature form.

It belongs to the 2H phosphoesterase superfamily. CNPase family. In terms of assembly, exists as monomers and homodimers.

It localises to the membrane. The protein localises to the melanosome. It catalyses the reaction a nucleoside 2',3'-cyclic phosphate + H2O = a nucleoside 2'-phosphate + H(+). Catalyzes the formation of 2'-nucleotide products from 2',3'-cyclic substrates. May participate in RNA metabolism in the myelinating cell, CNP is the third most abundant protein in central nervous system myelin. The chain is 2',3'-cyclic-nucleotide 3'-phosphodiesterase from Pongo abelii (Sumatran orangutan).